Consider the following 265-residue polypeptide: Type II pantothenate kinase (265 aa).

6-13 (DAGGTLIK) is an ATP binding site. Glu70 functions as the Proton acceptor in the catalytic mechanism. ATP is bound by residues Thr99, 121 to 125 (GGMIQ), Tyr137, and Ser225.

The protein belongs to the type II pantothenate kinase family. Homodimer.

It localises to the cytoplasm. The catalysed reaction is (R)-pantothenate + ATP = (R)-4'-phosphopantothenate + ADP + H(+). It participates in cofactor biosynthesis; coenzyme A biosynthesis; CoA from (R)-pantothenate: step 1/5. Its function is as follows. Catalyzes the phosphorylation of pantothenate (Pan), the first step in CoA biosynthesis. The protein is Type II pantothenate kinase of Staphylococcus epidermidis (strain ATCC 35984 / DSM 28319 / BCRC 17069 / CCUG 31568 / BM 3577 / RP62A).